A 268-amino-acid polypeptide reads, in one-letter code: Hydroxyethylthiazole kinase (268 aa).

Methionine 47 serves as a coordination point for substrate. 2 residues coordinate ATP: arginine 122 and threonine 168. Substrate is bound at residue alanine 195.

This sequence belongs to the Thz kinase family. The cofactor is Mg(2+).

The enzyme catalyses 5-(2-hydroxyethyl)-4-methylthiazole + ATP = 4-methyl-5-(2-phosphooxyethyl)-thiazole + ADP + H(+). Its pathway is cofactor biosynthesis; thiamine diphosphate biosynthesis; 4-methyl-5-(2-phosphoethyl)-thiazole from 5-(2-hydroxyethyl)-4-methylthiazole: step 1/1. Its function is as follows. Catalyzes the phosphorylation of the hydroxyl group of 4-methyl-5-beta-hydroxyethylthiazole (THZ). This chain is Hydroxyethylthiazole kinase, found in Rhizobium rhizogenes (strain K84 / ATCC BAA-868) (Agrobacterium radiobacter).